A 458-amino-acid chain; its full sequence is Zinc finger protein 239 (458 aa).

Lysine 108 is covalently cross-linked (Glycyl lysine isopeptide (Lys-Gly) (interchain with G-Cter in SUMO2)). A Phosphoserine modification is found at serine 191. 9 C2H2-type zinc fingers span residues 207 to 229 (YECSQCGKNFSQSSELLLHQRDH), 235 to 257 (YKCEQCGKGFTRSSSLLIHQAVH), 263 to 285 (YKCDKCGKGFTRSSSLLIHHAVH), 291 to 313 (YKCDKCGKGFSQSSKLHIHQRVH), 319 to 341 (YECEECGMSFSQRSNLHIHQRVH), 347 to 369 (YKCGECGKGFSQSSNLHIHRCIH), 375 to 397 (YQCYECGKGFSQSSDLRIHLRVH), 403 to 425 (YHCGKCGKGFSQSSKLLIHQRVH), and 431 to 453 (YECSKCGKGFSQSSNLHIHQRVH).

It belongs to the krueppel C2H2-type zinc-finger protein family.

The protein resides in the nucleus. May be involved in transcriptional regulation. This is Zinc finger protein 239 (ZNF239) from Homo sapiens (Human).